The sequence spans 311 residues: Cytosolic Fe-S cluster assembly factor Nubp1 homolog (311 aa).

[4Fe-4S] cluster contacts are provided by C9, C23, C26, and C32. 63-70 serves as a coordination point for ATP; the sequence is GKGGVGKS. Residues C241 and C244 each coordinate [4Fe-4S] cluster.

This sequence belongs to the Mrp/NBP35 ATP-binding proteins family. NUBP1/NBP35 subfamily. Heterotetramer of 2 Nubp1 and 2 Nubp2 chains. It depends on [4Fe-4S] cluster as a cofactor.

It is found in the cytoplasm. Functionally, component of the cytosolic iron-sulfur (Fe/S) protein assembly (CIA) machinery. Required for maturation of extramitochondrial Fe-S proteins. The Nubp1-Nubp2 heterotetramer forms a Fe-S scaffold complex, mediating the de novo assembly of an Fe-S cluster and its transfer to target apoproteins. In Drosophila grimshawi (Hawaiian fruit fly), this protein is Cytosolic Fe-S cluster assembly factor Nubp1 homolog.